An 838-amino-acid chain; its full sequence is Major vault protein (838 aa).

MVP repeat units lie at residues 13–52 (VHILDNNTNVTRCMVGPLVYTRKENERCLFNPKPCIVVPP), 53–114 (RFYC…FKLK), 118–170 (VNTG…HIIS), 171–223 (PNTA…ITLT), 224–278 (DTEA…IVLN), 280–328 (KEYC…NVVS), 329–380 (KDQA…IALD), and 381–433 (KNEG…CMSE).

As to quaternary structure, the vault ribonucleoprotein particle is a huge (400 A x 670 A) cage structure of 12.9 MDa. It consists of a dimer of half-vaults, with each half-vault comprising 39 identical major vault protein (MVP) chains, PARP4 and one or more vault RNAs (vRNAs).

The protein resides in the cytoplasm. It localises to the nucleus. Required for normal vault structure. Vaults are multi-subunit structures that may act as scaffolds for proteins involved in signal transduction. Vaults may also play a role in nucleo-cytoplasmic transport. The sequence is that of Major vault protein from Trypanosoma cruzi (strain CL Brener).